The following is a 94-amino-acid chain: Defensin-7 (94 aa).

An N-terminal signal peptide occupies residues 1–19 (MRTLTLLSAFLLVALQAWA). Disulfide bonds link Cys-65–Cys-93 and Cys-72–Cys-92.

Belongs to the alpha-defensin family.

The protein localises to the secreted. In terms of biological role, has antimicrobial activity. The protein is Defensin-7 (DEFA7) of Pan troglodytes (Chimpanzee).